A 456-amino-acid polypeptide reads, in one-letter code: Ribonuclease inhibitor (456 aa).

Position 1 is an N-acetylmethionine (Met1). 15 LRR repeats span residues 15–43 (WTELLPLLQQYEVVRLDDCGLTEEHCKDI), 44–71 (GSALRANPSLTELCLRTNELGDAGVHLV), 72–100 (LQGLQSPTCKIQKLSLQNCSLTEAGCGVL), 101–128 (PSTLRSLPTLRELHLSDNPLGDAGLRLL), 129–157 (CEGLLDPQCHLEKLQLEYCRLTAASCEPL), 158–185 (ASVLRATRALKELTVSNNDIGEAGARVL), 186–214 (GQGLADSACQLETLRLENCGLTPANCKDL), 215–242 (CGIVASQASLRELDLGSNGLGDAGIAEL), 243–271 (CPGLLSPASRLKTLWLWECDITASGCRDL), 272–299 (CRVLQAKETLKELSLAGNKLGDEGARLL), 300–328 (CESLLQPGCQLESLWVKSCSLTAACCQHV), 329–356 (SLMLTQNKHLLELQLSSNKLGDSGIQEL), 357–385 (CQALSQPGTTLRVLCLGDCEVTNSGCSSL), 386–413 (ASLLLANRSLRELDLSNNCVGDPGVLQL), and 414–442 (LGSLEQPGCALEQLVLYDTYWTEEVEDRL). A Phosphoserine modification is found at Ser86.

In terms of assembly, forms high-affinity heterodimers with RNASE1, ANG and RNASE2.

The protein localises to the cytoplasm. It is found in the nucleus. Ribonuclease inhibitor which inhibits RNASE1, RNASE2 and angiogenin (ANG). May play a role in redox homeostasis. Required to inhibit the cytotoxic tRNA ribonuclease activity of ANG in the cytoplasm in absence of stress. Relocates to the nucleus in response to stress, relieving inhibition of ANG in the cytoplasm, and inhibiting the angiogenic activity of ANG in the nucleus. The sequence is that of Ribonuclease inhibitor (RNH1) from Sus scrofa (Pig).